The primary structure comprises 560 residues: 2-hydroxyacyl-CoA lyase (560 aa).

Glutamate 49 contacts thiamine diphosphate. Residues aspartate 446 and asparagine 473 each contribute to the Mg(2+) site. A Peroxisomal target signal 1 (PTS1) motif is present at residues 558–560 (PRL).

This sequence belongs to the TPP enzyme family. It depends on Mg(2+) as a cofactor. Thiamine diphosphate is required as a cofactor.

Its subcellular location is the cytoplasm. The protein localises to the peroxisome matrix. The enzyme catalyses an (R)-2-hydroxy-long-chain-fatty acyl-CoA = a long-chain fatty aldehyde + formyl-CoA. It catalyses the reaction a 2-hydroxy-3-methyl fatty acyl-CoA = a 2-methyl-branched fatty aldehyde + formyl-CoA. Catalyzes a carbon-carbon cleavage reaction; cleaves a 2-hydroxy-3-methylacyl-CoA into formyl-CoA and a 2-methyl-branched fatty aldehyde. This Saccharomyces cerevisiae (strain ATCC 204508 / S288c) (Baker's yeast) protein is 2-hydroxyacyl-CoA lyase.